The primary structure comprises 433 residues: Tol-Pal system protein TolB (433 aa).

The N-terminal stretch at 1-21 (MRNLLRGMLVVICCMAGIAAA) is a signal peptide.

The protein belongs to the TolB family. As to quaternary structure, the Tol-Pal system is composed of five core proteins: the inner membrane proteins TolA, TolQ and TolR, the periplasmic protein TolB and the outer membrane protein Pal. They form a network linking the inner and outer membranes and the peptidoglycan layer.

The protein localises to the periplasm. Functionally, part of the Tol-Pal system, which plays a role in outer membrane invagination during cell division and is important for maintaining outer membrane integrity. The protein is Tol-Pal system protein TolB of Pseudomonas fluorescens (strain ATCC BAA-477 / NRRL B-23932 / Pf-5).